A 78-amino-acid polypeptide reads, in one-letter code: uncharacterized protein (78 aa).

2 consecutive transmembrane segments (helical) span residues Ser-20–Val-40 and Leu-57–Ala-77.

It localises to the cell membrane. This is an uncharacterized protein from Escherichia coli (strain K12).